Consider the following 238-residue polypeptide: MIAFIVLLSLAAVLQQSSGTVDFASESSNKKDYQKEIVDKHNALRRSVKPTARNMLRMKWNSRAAQNAKRWADRCTFAHSPPHTRTVGKLRCGENIFMSSQPFAWSGVVQAWYDEVKKFVYGIGAKPPGSVIGHYTQVVWYKSHLLGCASAKCSSTKYLYVCQYCPAGNIRGSIATPYKSGPPCADCPSACVNGLCTNPCKHEDDFSNCKALAKNSKCQTAWIKSKCPATCFCHNKII.

The first 19 residues, 1–19 (MIAFIVLLSLAAVLQQSSG), serve as a signal peptide directing secretion. Positions 20–28 (TVDFASESS) are excised as a propeptide. The SCP domain maps to 38–164 (VDKHNALRRS…STKYLYVCQY (127 aa)). Cystine bridges form between Cys-75–Cys-153, Cys-92–Cys-165, Cys-148–Cys-162, Cys-184–Cys-191, Cys-187–Cys-196, Cys-200–Cys-233, Cys-209–Cys-227, and Cys-218–Cys-231. Residues 200–233 (CKHEDDFSNCKALAKNSKCQTAWIKSKCPATCFC) enclose the ShKT domain.

This sequence belongs to the CRISP family. As to expression, expressed by the venom gland.

The protein localises to the secreted. Functionally, blocks olfactory (CNGA2) and retinal (CNGA1) CNG channel currents. Does not affect neither depolarization- nor caffeine-induced contraction of smooth muscle. In Hoplocephalus stephensii (Stephens's banded snake), this protein is Cysteine-rich venom protein pseudechetoxin-like.